Reading from the N-terminus, the 370-residue chain is Anthranilate phosphoribosyltransferase (370 aa).

Residues methionine 1 to tryptophan 27 are disordered. 5-phospho-alpha-D-ribose 1-diphosphate contacts are provided by residues glycine 107, glycine 110 to aspartate 111, threonine 115, asparagine 117 to threonine 120, lysine 135 to serine 143, and glycine 147. An anthranilate-binding site is contributed by glycine 107. Serine 119 contacts Mg(2+). Residue asparagine 138 coordinates anthranilate. Residue arginine 193 participates in anthranilate binding. Residues aspartate 251 and glutamate 252 each contribute to the Mg(2+) site.

It belongs to the anthranilate phosphoribosyltransferase family. As to quaternary structure, homodimer. The cofactor is Mg(2+).

It catalyses the reaction N-(5-phospho-beta-D-ribosyl)anthranilate + diphosphate = 5-phospho-alpha-D-ribose 1-diphosphate + anthranilate. It functions in the pathway amino-acid biosynthesis; L-tryptophan biosynthesis; L-tryptophan from chorismate: step 2/5. In terms of biological role, catalyzes the transfer of the phosphoribosyl group of 5-phosphorylribose-1-pyrophosphate (PRPP) to anthranilate to yield N-(5'-phosphoribosyl)-anthranilate (PRA). This Mycobacterium bovis (strain ATCC BAA-935 / AF2122/97) protein is Anthranilate phosphoribosyltransferase.